Reading from the N-terminus, the 130-residue chain is Small ribosomal subunit protein uS8B (130 aa).

It belongs to the universal ribosomal protein uS8 family.

The polypeptide is Small ribosomal subunit protein uS8B (RpS15Ab) (Drosophila melanogaster (Fruit fly)).